Here is a 318-residue protein sequence, read N- to C-terminus: NADH-ubiquinone oxidoreductase chain 1 (318 aa).

Transmembrane regions (helical) follow at residues 2 to 22 (FMIN…FLTL), 68 to 88 (ITMF…MWTP), 100 to 120 (LGVL…LWSG), 146 to 166 (LAII…PALI), 171 to 191 (HMWL…STLA), 222 to 242 (LFFL…TILF), 253 to 273 (ELYT…FLWV), and 294 to 314 (LPLT…TAGI).

It belongs to the complex I subunit 1 family.

The protein localises to the mitochondrion inner membrane. It catalyses the reaction a ubiquinone + NADH + 5 H(+)(in) = a ubiquinol + NAD(+) + 4 H(+)(out). In terms of biological role, core subunit of the mitochondrial membrane respiratory chain NADH dehydrogenase (Complex I) that is believed to belong to the minimal assembly required for catalysis. Complex I functions in the transfer of electrons from NADH to the respiratory chain. The immediate electron acceptor for the enzyme is believed to be ubiquinone. This Coelops frithii (East Asian tailless leaf-nosed bat) protein is NADH-ubiquinone oxidoreductase chain 1 (MT-ND1).